Here is a 341-residue protein sequence, read N- to C-terminus: MKALSKLKPEEGIWMVDAPKPEMGHNDLLIKIRKTAICGTDVHIYNWDEWSQNTIPVPMVVGHEYVGEVVDIGQEVRGFSIGDRVSGEGHITCGHCRNCRAGRTHLCRNTSGVGVNRDGAFAEYLVIPAFNAFKIPDDISDDLASIFDPFGNAVHTALSFDLVGEDVLITGAGPIGIMAAAVCRHVGARHVVITDVNEYRLELAQKMGATRAVNVAKEDLKDVMSELGMTEGFDVGLEMSGVPSAFHSMLDTMNHGGKVAMLGIPGGDMAIDWSKVIFKGLIIKGIYGREMFETWYKMASLIQSGLDISPIITHHYKVDEFQQGFDAMRSGQSGKVILNWD.

Cysteine 38 contributes to the Zn(2+) binding site. Active-site charge relay system residues include threonine 40 and histidine 43. 6 residues coordinate Zn(2+): histidine 63, glutamate 64, cysteine 93, cysteine 96, cysteine 99, and cysteine 107. Residues isoleucine 175, aspartate 195, arginine 200, 262–264 (LGI), and 286–287 (IY) contribute to the NAD(+) site.

The protein belongs to the zinc-containing alcohol dehydrogenase family. As to quaternary structure, homotetramer. Requires Zn(2+) as cofactor.

Its subcellular location is the cytoplasm. The enzyme catalyses L-threonine + NAD(+) = (2S)-2-amino-3-oxobutanoate + NADH + H(+). Its pathway is amino-acid degradation; L-threonine degradation via oxydo-reductase pathway; glycine from L-threonine: step 1/2. In terms of biological role, catalyzes the NAD(+)-dependent oxidation of L-threonine to 2-amino-3-ketobutyrate. This Shewanella woodyi (strain ATCC 51908 / MS32) protein is L-threonine 3-dehydrogenase.